The sequence spans 944 residues: Nonsense-mediated mRNA decay factor SMG8 (944 aa).

Disordered regions lie at residues 559–601 and 629–654; these read LNNG…SNCC and ASSEQLLNSEQNTTSSGTSSADTDNE. Over residues 568–589 the composition is skewed to acidic residues; it reads QDEDAEEDEAEEEEGQEQEQPT. Residues 629–640 show a composition bias toward polar residues; the sequence is ASSEQLLNSEQN. A compositionally biased stretch (low complexity) spans 641 to 650; it reads TTSSGTSSAD.

Belongs to the SMG8 family.

Involved in nonsense-mediated decay (NMD) of mRNAs containing premature stop codons. Probable component of kinase complex containing nonC and recruited to stalled ribosomes. The protein is Nonsense-mediated mRNA decay factor SMG8 of Drosophila melanogaster (Fruit fly).